A 444-amino-acid chain; its full sequence is Ribulose bisphosphate carboxylase (444 aa).

Lys-163 serves as the catalytic Proton acceptor. Lys-165 contributes to the substrate binding site. Mg(2+) is bound by residues Lys-189, Asp-191, and Glu-192. N6-carboxylysine is present on Lys-189. Catalysis depends on His-281, which acts as the Proton acceptor. Residues Arg-282, His-314, 367-369 (SGG), and 389-392 (QLGG) each bind substrate.

This sequence belongs to the RuBisCO large chain family. Type III subfamily. As to quaternary structure, homodecamer, consisting of five dimer units which form a ring-like pentagonal structure. This arrangement is essential for its high thermostability. In contrast to form I RuBisCO, the form III RuBisCO is composed solely of large subunits. Mg(2+) serves as cofactor.

The catalysed reaction is 2 (2R)-3-phosphoglycerate + 2 H(+) = D-ribulose 1,5-bisphosphate + CO2 + H2O. It carries out the reaction D-ribulose 1,5-bisphosphate + O2 = 2-phosphoglycolate + (2R)-3-phosphoglycerate + 2 H(+). Functionally, catalyzes the addition of molecular CO(2) and H(2)O to ribulose 1,5-bisphosphate (RuBP), generating two molecules of 3-phosphoglycerate (3-PGA). Functions in an archaeal AMP degradation pathway, together with AMP phosphorylase and R15P isomerase. The protein is Ribulose bisphosphate carboxylase of Thermococcus kodakarensis (strain ATCC BAA-918 / JCM 12380 / KOD1) (Pyrococcus kodakaraensis (strain KOD1)).